The sequence spans 394 residues: Protein TsgA homolog (394 aa).

12 helical membrane passes run 11 to 31 (WISY…GMVM), 51 to 71 (FLNA…EIIP), 76 to 96 (LMFG…GKSL), 101 to 121 (LCMF…TFLI), 134 to 154 (LLFT…VAAM), 162 to 182 (WYWV…LTLF), 206 to 226 (IGVL…LGFI), 251 to 271 (FWTS…FFDL), 274 to 294 (IVTI…STDN), 302 to 322 (IMAL…LGSL), 334 to 354 (FILT…GPIV), and 363 to 383 (LTTA…LGFV).

The protein belongs to the major facilitator superfamily. TsgA family.

The protein localises to the cell inner membrane. In Serratia proteamaculans (strain 568), this protein is Protein TsgA homolog.